The following is a 415-amino-acid chain: Phosphoglycerate kinase (415 aa).

Valine 23, aspartate 24, phenylalanine 25, asparagine 26, glutamine 39, arginine 40, serine 63, histidine 64, glycine 66, arginine 67, leucine 122, arginine 123, and arginine 170 together coordinate (2R)-3-phosphoglycerate. Glycine 213 serves as a coordination point for ADP. Glycine 213 contributes to the CDP binding site. Positions 214 and 215 each coordinate AMP. Alanine 214 lines the ATP pocket. Alanine 214 is a binding site for Mg(2+). Residue aspartate 218 coordinates CDP. Position 218 (aspartate 218) interacts with Mg(2+). Lysine 219 contributes to the AMP binding site. Residue lysine 219 participates in ATP binding. Glycine 237 contacts ADP. CDP is bound at residue glycine 237. Residues glycine 238 and glycine 311 each coordinate AMP. ATP contacts are provided by glycine 238 and glycine 311. 2 residues coordinate CDP: glycine 336 and phenylalanine 341. Residue phenylalanine 341 participates in ADP binding. Glutamate 342 is an AMP binding site. ATP contacts are provided by glutamate 342, aspartate 373, and threonine 374. Aspartate 373 provides a ligand contact to Mg(2+).

It belongs to the phosphoglycerate kinase family. Monomer. The cofactor is Mg(2+).

The protein resides in the cytoplasm. Its subcellular location is the mitochondrion. It carries out the reaction (2R)-3-phosphoglycerate + ATP = (2R)-3-phospho-glyceroyl phosphate + ADP. The protein operates within carbohydrate degradation; glycolysis; pyruvate from D-glyceraldehyde 3-phosphate: step 2/5. Catalyzes one of the two ATP producing reactions in the glycolytic pathway via the reversible conversion of 1,3-diphosphoglycerate to 3-phosphoglycerate. Both L- and D- forms of purine and pyrimidine nucleotides can be used as substrates, but the activity is much lower on pyrimidines. Negatively regulates the biosynthesis of acetyl-CoA from pyruvate in the mitochondrion. This Penicillium chrysogenum (Penicillium notatum) protein is Phosphoglycerate kinase (PGKA).